Reading from the N-terminus, the 269-residue chain is MFPENKMLLIAGPCVIEDNSVFETARRLKEIVAPYASSVHWIFKSSYDKANRSSVHNYRGPGLKLGLQTLAKIKEELDVEILTDVHSPDEAREAAKVCDIIQVPAFLCRQTDLLVTAGETQAIVNIKKGQFLSPWEMQGPIDKVLSTGNNKIILTERGCSFGYNNLVSDMRSIEVLRRFGFPVVFDGTHSVQLPGALHSQSGGQTEFIPVLTRSAIAAGVQGLFIETHPNPSSALSDAASMLSLKDLERLLPAWVQLFTYIQEMDAVSV.

The protein belongs to the KdsA family.

The protein localises to the cytoplasm. It catalyses the reaction D-arabinose 5-phosphate + phosphoenolpyruvate + H2O = 3-deoxy-alpha-D-manno-2-octulosonate-8-phosphate + phosphate. It functions in the pathway carbohydrate biosynthesis; 3-deoxy-D-manno-octulosonate biosynthesis; 3-deoxy-D-manno-octulosonate from D-ribulose 5-phosphate: step 2/3. Its pathway is bacterial outer membrane biogenesis; lipopolysaccharide biosynthesis. The polypeptide is 2-dehydro-3-deoxyphosphooctonate aldolase (Chlamydia trachomatis serovar A (strain ATCC VR-571B / DSM 19440 / HAR-13)).